The following is a 230-amino-acid chain: Phosphoglycolate phosphatase (230 aa).

Catalysis depends on D9, which acts as the Nucleophile. Positions 9, 11, and 175 each coordinate Mg(2+).

Belongs to the HAD-like hydrolase superfamily. CbbY/CbbZ/Gph/YieH family. Requires Mg(2+) as cofactor.

The catalysed reaction is 2-phosphoglycolate + H2O = glycolate + phosphate. Its pathway is organic acid metabolism; glycolate biosynthesis; glycolate from 2-phosphoglycolate: step 1/1. Functionally, specifically catalyzes the dephosphorylation of 2-phosphoglycolate. Is involved in the dissimilation of the intracellular 2-phosphoglycolate formed during the DNA repair of 3'-phosphoglycolate ends, a major class of DNA lesions induced by oxidative stress. The polypeptide is Phosphoglycolate phosphatase (Psychrobacter arcticus (strain DSM 17307 / VKM B-2377 / 273-4)).